A 475-amino-acid chain; its full sequence is Ribulose bisphosphate carboxylase large chain (475 aa).

A propeptide spanning residues M1–S2 is cleaved from the precursor. Position 3 is an N-acetylproline (P3). At K14 the chain carries N6,N6,N6-trimethyllysine. N123 and T173 together coordinate substrate. The active-site Proton acceptor is the K175. K177 contributes to the substrate binding site. 3 residues coordinate Mg(2+): K201, D203, and E204. N6-carboxylysine is present on K201. Residue H294 is the Proton acceptor of the active site. Substrate contacts are provided by R295, H327, and S379.

Belongs to the RuBisCO large chain family. Type I subfamily. As to quaternary structure, heterohexadecamer of 8 large chains and 8 small chains; disulfide-linked. The disulfide link is formed within the large subunit homodimers. Requires Mg(2+) as cofactor. Post-translationally, the disulfide bond which can form in the large chain dimeric partners within the hexadecamer appears to be associated with oxidative stress and protein turnover.

It is found in the plastid. The protein resides in the chloroplast. It carries out the reaction 2 (2R)-3-phosphoglycerate + 2 H(+) = D-ribulose 1,5-bisphosphate + CO2 + H2O. It catalyses the reaction D-ribulose 1,5-bisphosphate + O2 = 2-phosphoglycolate + (2R)-3-phosphoglycerate + 2 H(+). Its function is as follows. RuBisCO catalyzes two reactions: the carboxylation of D-ribulose 1,5-bisphosphate, the primary event in carbon dioxide fixation, as well as the oxidative fragmentation of the pentose substrate in the photorespiration process. Both reactions occur simultaneously and in competition at the same active site. The polypeptide is Ribulose bisphosphate carboxylase large chain (Cedrus deodara (Deodar cedar)).